A 318-amino-acid polypeptide reads, in one-letter code: Malate dehydrogenase (318 aa).

NAD(+)-binding positions include 10-15 (GAGNIG) and aspartate 34. Substrate is bound by residues arginine 83 and arginine 89. NAD(+)-binding positions include asparagine 96 and 119 to 121 (ITN). 2 residues coordinate substrate: asparagine 121 and arginine 152. Histidine 176 functions as the Proton acceptor in the catalytic mechanism.

This sequence belongs to the LDH/MDH superfamily. MDH type 3 family.

It catalyses the reaction (S)-malate + NAD(+) = oxaloacetate + NADH + H(+). In terms of biological role, catalyzes the reversible oxidation of malate to oxaloacetate. This Rhodospirillum rubrum (strain ATCC 11170 / ATH 1.1.1 / DSM 467 / LMG 4362 / NCIMB 8255 / S1) protein is Malate dehydrogenase.